The chain runs to 289 residues: ATP synthase gamma chain (289 aa).

The protein belongs to the ATPase gamma chain family. In terms of assembly, F-type ATPases have 2 components, CF(1) - the catalytic core - and CF(0) - the membrane proton channel. CF(1) has five subunits: alpha(3), beta(3), gamma(1), delta(1), epsilon(1). CF(0) has three main subunits: a, b and c.

The protein resides in the cell inner membrane. In terms of biological role, produces ATP from ADP in the presence of a proton gradient across the membrane. The gamma chain is believed to be important in regulating ATPase activity and the flow of protons through the CF(0) complex. The chain is ATP synthase gamma chain from Coxiella burnetii (strain CbuK_Q154) (Coxiella burnetii (strain Q154)).